The primary structure comprises 287 residues: Pirin-1 (287 aa).

T2 is subject to N-acetylthreonine.

Belongs to the pirin family. Interacts with the G protein alpha-1 subunit GPA1. Interacts with NFYB6 and NFYB9.

The protein localises to the nucleus. Involved in abscisic acid signal transduction. Plays a role in seed germination and early seedling development. Involved in the blue light (BL) signaling. In Arabidopsis thaliana (Mouse-ear cress), this protein is Pirin-1 (PRN1).